We begin with the raw amino-acid sequence, 276 residues long: Microtubule-associated protein RP/EB family member 1A (276 aa).

The region spanning 13-115 (FVGRNEILTW…FLQWLKRFCD (103 aa)) is the Calponin-homology (CH) domain. Residues 124–172 (ENYNPVERRSRNGKERSVKGSNKIPKSLQTNNNHPPPNSSSVGLSKASG) are disordered. The span at 129–141 (VERRSRNGKERSV) shows a compositional bias: basic and acidic residues. A compositionally biased stretch (low complexity) spans 162 to 172 (SSSVGLSKASG). The EB1 C-terminal domain occupies 173–243 (PKSAKAAEVQ…LYATDANESA (71 aa)). The segment at 252 to 276 (NQSLGVEDDEAEGNGEQLEEEKTQA) is disordered. Over residues 257-270 (VEDDEAEGNGEQLE) the composition is skewed to acidic residues.

The protein belongs to the MAPRE family. In terms of assembly, homodimer and heterodimer with EB1B. Interacts with tobamovirus movement protein. In terms of tissue distribution, highly expressed in guard cells of leaf stomata, pollen grains and pollen tubes. Expressed in young roots.

It is found in the cytoplasm. The protein localises to the cytoskeleton. The protein resides in the spindle pole. It localises to the phragmoplast. In terms of biological role, binds to the plus end of microtubules and regulates the dynamics of the microtubule cytoskeleton. May be involved in anchoring microtubules to their nucleation sites and/or functioning as a reservoir for distribution to the growing end. In plants, microtubule minus ends are not necessarily severed from the nucleation site and transported to the plus end of a microtubule as part of the recycling process. May play a role in endomembrane organization during polarized growth of plant cells. Interacts with the tobamovirus movement protein (MP) and may play a role in the association of MP with the microtubule system during infection. The chain is Microtubule-associated protein RP/EB family member 1A (EB1A) from Arabidopsis thaliana (Mouse-ear cress).